The primary structure comprises 122 residues: Large ribosomal subunit protein uL14c (122 aa).

This sequence belongs to the universal ribosomal protein uL14 family. As to quaternary structure, part of the 50S ribosomal subunit.

It is found in the plastid. The protein localises to the chloroplast. Binds to 23S rRNA. This is Large ribosomal subunit protein uL14c from Tupiella akineta (Green alga).